A 154-amino-acid polypeptide reads, in one-letter code: Endoribonuclease YbeY (154 aa).

Residues His-116, His-120, and His-126 each contribute to the Zn(2+) site.

The protein belongs to the endoribonuclease YbeY family. Zn(2+) is required as a cofactor.

It is found in the cytoplasm. Functionally, single strand-specific metallo-endoribonuclease involved in late-stage 70S ribosome quality control and in maturation of the 3' terminus of the 16S rRNA. This is Endoribonuclease YbeY from Chromohalobacter salexigens (strain ATCC BAA-138 / DSM 3043 / CIP 106854 / NCIMB 13768 / 1H11).